Consider the following 358-residue polypeptide: MNRGMKPINELISPDTKHYSFTEPFQTELGATLPSVEVAYRTWGTLNEARDNVILICHALTGSADADQWWGGLFGEGCGFDATRDFIICSNVLGSCYGTTGPLSPNPATGRHYGPDFPLITIRDMVHVERHLLRHLGIERVKLVVGASLGGMQVLEWGALYPEVALALMPMGISGRHSAWCIAQSEAQRQAIMADALWKDGWYEEDAPPARGLGAARMMAMCTYRSFRNFEEKFGRQRQEDGTFKAVSYMHHQGGRLVERFDANTYITLTRAMDMHDLGRGRSGYEEAVCAMTQPVEILSIDSDVLYPKSEQQELACLLPNSKILYLDEPYGHDAFLIDVERVSRMVRDFLQAISRKG.

Residues 52–337 form the AB hydrolase-1 domain; that stretch reads NVILICHALT…DEPYGHDAFL (286 aa). Residue S148 is the Nucleophile of the active site. Residue R217 participates in substrate binding. Catalysis depends on residues D304 and H333. D334 serves as a coordination point for substrate.

It belongs to the AB hydrolase superfamily. MetX family. Homodimer.

The protein localises to the cytoplasm. It carries out the reaction L-homoserine + acetyl-CoA = O-acetyl-L-homoserine + CoA. It participates in amino-acid biosynthesis; L-methionine biosynthesis via de novo pathway; O-acetyl-L-homoserine from L-homoserine: step 1/1. Functionally, transfers an acetyl group from acetyl-CoA to L-homoserine, forming acetyl-L-homoserine. This chain is Homoserine O-acetyltransferase, found in Chlorobium luteolum (strain DSM 273 / BCRC 81028 / 2530) (Pelodictyon luteolum).